We begin with the raw amino-acid sequence, 134 residues long: Rubredoxin-2 (134 aa).

Positions 1–53 (MAKYQCPDCQYIYDECKGEPHEGFQPNTNWGEIPEEWACPDCAVRDKIDFKML) constitute a Rubredoxin-like domain. Fe cation is bound by residues cysteine 6, cysteine 9, cysteine 39, and cysteine 42. A compositionally biased stretch (basic and acidic residues) spans 99–116 (SITDERENTPDNKVERRS). The interval 99–134 (SITDERENTPDNKVERRSQSQAVRRSSVKKIKNNKR) is disordered. Residues 124 to 134 (SSVKKIKNNKR) show a composition bias toward basic residues.

Belongs to the rubredoxin family. Requires Fe(3+) as cofactor.

The protein resides in the cytoplasm. Its pathway is hydrocarbon metabolism; alkane degradation. Functionally, involved in the hydrocarbon hydroxylating system, which transfers electrons from NADH to rubredoxin reductase and then through rubredoxin to alkane 1 monooxygenase. This chain is Rubredoxin-2 (alkF), found in Pseudomonas putida (Arthrobacter siderocapsulatus).